Consider the following 176-residue polypeptide: Ribosome rescue factor SmrB (176 aa).

Positions 98–173 constitute a Smr domain; that stretch reads LDLHGLTQMQ…GTAAILLLVE (76 aa).

The protein belongs to the SmrB family. In terms of assembly, associates with collided ribosomes, but not with correctly translating polysomes.

In terms of biological role, acts as a ribosome collision sensor. Detects stalled/collided disomes (pairs of ribosomes where the leading ribosome is stalled and a second ribosome has collided with it) and endonucleolytically cleaves mRNA at the 5' boundary of the stalled ribosome. Stalled/collided disomes form a new interface (primarily via the 30S subunits) that binds SmrB. Cleaved mRNA becomes available for tmRNA ligation, leading to ribosomal subunit dissociation and rescue of stalled ribosomes. The polypeptide is Ribosome rescue factor SmrB (Serratia proteamaculans (strain 568)).